Reading from the N-terminus, the 140-residue chain is Large ribosomal subunit protein uL13 (140 aa).

Belongs to the universal ribosomal protein uL13 family. In terms of assembly, part of the 50S ribosomal subunit.

In terms of biological role, this protein is one of the early assembly proteins of the 50S ribosomal subunit, although it is not seen to bind rRNA by itself. It is important during the early stages of 50S assembly. The polypeptide is Large ribosomal subunit protein uL13 (Methanosarcina mazei (strain ATCC BAA-159 / DSM 3647 / Goe1 / Go1 / JCM 11833 / OCM 88) (Methanosarcina frisia)).